Reading from the N-terminus, the 367-residue chain is Dihydroorotate dehydrogenase (quinone) (367 aa).

FMN is bound by residues 67–71 (AGFDK) and Thr-91. Lys-71 provides a ligand contact to substrate. A substrate-binding site is contributed by 116–120 (NRLGF). Residues Asn-145 and Asn-178 each contribute to the FMN site. Residue Asn-178 coordinates substrate. Ser-181 (nucleophile) is an active-site residue. Position 183 (Asn-183) interacts with substrate. FMN contacts are provided by Lys-219 and Thr-247. Residue 248–249 (NT) coordinates substrate. Residues Gly-269, Gly-298, and 319-320 (YT) contribute to the FMN site.

The protein belongs to the dihydroorotate dehydrogenase family. Type 2 subfamily. As to quaternary structure, monomer. FMN serves as cofactor.

Its subcellular location is the cell membrane. The enzyme catalyses (S)-dihydroorotate + a quinone = orotate + a quinol. It participates in pyrimidine metabolism; UMP biosynthesis via de novo pathway; orotate from (S)-dihydroorotate (quinone route): step 1/1. Its function is as follows. Catalyzes the conversion of dihydroorotate to orotate with quinone as electron acceptor. The polypeptide is Dihydroorotate dehydrogenase (quinone) (Roseiflexus castenholzii (strain DSM 13941 / HLO8)).